The following is a 359-amino-acid chain: Alkanal monooxygenase alpha chain (359 aa).

It belongs to the bacterial luciferase oxidoreductase family. In terms of assembly, heterodimer of an alpha and a beta chain.

It carries out the reaction a long-chain fatty aldehyde + FMNH2 + O2 = a long-chain fatty acid + hnu + FMN + H2O + 2 H(+). Functionally, light-emitting reaction in luminous bacteria. This chain is Alkanal monooxygenase alpha chain (luxA), found in Photorhabdus laumondii subsp. laumondii (strain DSM 15139 / CIP 105565 / TT01) (Photorhabdus luminescens subsp. laumondii).